The primary structure comprises 370 residues: Mitogen-activated protein kinase mpkC (370 aa).

The 280-residue stretch at 19–298 (YANVRPVGLG…AAESLEHPYL (280 aa)) folds into the Protein kinase domain. Residues 25-33 (VGLGAFGLV) and Lys48 contribute to the ATP site. Asp140 acts as the Proton acceptor in catalysis. Thr170 is modified (phosphothreonine). The TXY motif lies at 170-172 (TGY). The residue at position 172 (Tyr172) is a Phosphotyrosine.

It belongs to the protein kinase superfamily. Ser/Thr protein kinase family. MAP kinase subfamily. HOG1 sub-subfamily. Requires Mg(2+) as cofactor. In terms of processing, dually phosphorylated on Thr-170 and Tyr-172, which activates the enzyme.

It catalyses the reaction L-seryl-[protein] + ATP = O-phospho-L-seryl-[protein] + ADP + H(+). The enzyme catalyses L-threonyl-[protein] + ATP = O-phospho-L-threonyl-[protein] + ADP + H(+). With respect to regulation, activated by tyrosine and threonine phosphorylation. Functionally, mitogen-activated protein kinase required for growth on media where sorbitol or mannitol is the sole carbon source. This Aspergillus terreus (strain NIH 2624 / FGSC A1156) protein is Mitogen-activated protein kinase mpkC (mpkC).